The chain runs to 1171 residues: Protein diaphanous homolog 3 (1171 aa).

The span at 1–15 (MERHRARALGRDSKS) shows a compositional bias: basic and acidic residues. Positions 1–40 (MERHRARALGRDSKSSRRKGLQSAPPAGPYEPGEKRPKLH) are disordered. The Nuclear localization signal motif lies at 16–39 (SRRKGLQSAPPAGPYEPGEKRPKL). Thr-47 bears the Phosphothreonine mark. Ser-56 bears the Phosphoserine mark. A disordered region spans residues 60–95 (PGSKKERPPLPHLKTVSGISDSSSLSSETMENNPKA). Residues 76 to 86 (SGISDSSSLSS) are compositionally biased toward low complexity. Residues 93 to 455 (PKALPESEVL…QIVLHRDGTD (363 aa)) form the GBD/FH3 domain. Ser-154 is subject to Phosphoserine. 2 coiled-coil regions span residues 373–403 (EHKEEDLSEFFHRLEDIRAELDEASDVYSML) and 478–533 (QAKL…FGAL). Residues 532-601 (ALPPGTKIPL…PPPPLGFLGG (70 aa)) are disordered. The region spanning 540–610 (PLQPSVEGEA…GQSSIPLNLP (71 aa)) is the FH1 domain. Residues 553–596 (ALPPAPPALSGGVPPPPPPPPPPPPPLPGMPMPFGGPVPPPPPL) are compositionally biased toward pro residues. At Ser-604 the chain carries Phosphoserine. An FH2 domain is found at 615-1013 (PKKEFKPEIS…EKRARIAKER (399 aa)). 2 coiled-coil regions span residues 887–918 (DKASRVSVEMLEKNVKQMGRQLQQLEKNLETF) and 988–1038 (MLAL…GDET). A DAD domain is found at 1036–1066 (DETGVMDSLLEALQSGAAFRDRRKRTPKLKD). Residues Ser-1072 and Ser-1157 each carry the phosphoserine modification. Residues 1162 to 1171 (EALLARLRAL) carry the Nuclear export signal motif.

The protein belongs to the formin homology family. Diaphanous subfamily. Ubiquitinated.

It localises to the cytoplasm. The protein resides in the nucleus. In terms of biological role, actin nucleation and elongation factor required for the assembly of F-actin structures, such as actin cables and stress fibers. Required for cytokinesis, stress fiber formation and transcriptional activation of the serum response factor. Binds to GTP-bound form of Rho and to profilin: acts in a Rho-dependent manner to recruit profilin to the membrane, where it promotes actin polymerization. DFR proteins couple Rho and Src tyrosine kinase during signaling and the regulation of actin dynamics. Also acts as an actin nucleation and elongation factor in the nucleus by promoting nuclear actin polymerization inside the nucleus to drive serum-dependent SRF-MRTFA activity. In Mus musculus (Mouse), this protein is Protein diaphanous homolog 3 (Diaph3).